A 454-amino-acid polypeptide reads, in one-letter code: Trigger factor (454 aa).

The region spanning 169–261 is the PPIase FKBP-type domain; it reads GDVAIADYEG…LKELKSRELP (93 aa).

This sequence belongs to the FKBP-type PPIase family. Tig subfamily.

The protein resides in the cytoplasm. The enzyme catalyses [protein]-peptidylproline (omega=180) = [protein]-peptidylproline (omega=0). Functionally, involved in protein export. Acts as a chaperone by maintaining the newly synthesized protein in an open conformation. Functions as a peptidyl-prolyl cis-trans isomerase. This Picosynechococcus sp. (strain ATCC 27264 / PCC 7002 / PR-6) (Agmenellum quadruplicatum) protein is Trigger factor.